An 876-amino-acid chain; its full sequence is Protein TORMOZ EMBRYO DEFECTIVE (876 aa).

WD repeat units follow at residues 58-97, 100-139, 142-183, 190-229, 255-294, 308-347, 356-396, 399-441, 444-484, 497-536, 539-580, 581-620, and 623-662; these read GESD…CIRS, GHEG…CTHY, GHKG…TEKK, KHFS…CKAT, LDQK…CLYE, ESKR…EETE, GYNE…CSYV, GHKE…CIGV, GHNG…EDSE, AHDK…HVVT, GHKR…KTFE, GHTS…CIAT, and QHED…DKED. The segment at 816–876 is disordered; that stretch reads VETEYPKDEK…AEAQGSVIAV (61 aa). The segment covering 819–831 has biased composition (basic and acidic residues); sequence EYPKDEKKKEKDV. The short motif at 848-855 is the Nuclear localization signal element; sequence SRKRKSQK. A compositionally biased stretch (basic residues) spans 849–864; that stretch reads RKRKSQKSKGKSNKKR.

Preferentially expressed in dividing cells in a variety of tissues and meristematic regions.

It localises to the nucleus. The protein resides in the nucleolus. Functionally, essential protein involved in the regulation of cell division planes during embryogenesis which defines cell patterning, especially longitudinal division planes of the proembryo, probably via the regulation of embryo patterning genes expression patterns. This is Protein TORMOZ EMBRYO DEFECTIVE from Arabidopsis thaliana (Mouse-ear cress).